Here is an 81-residue protein sequence, read N- to C-terminus: Thrombin-like enzyme collinein-3 (81 aa).

The active site involves D4. A disulfide bridge connects residues C51 and C68.

Monomer. In terms of tissue distribution, expressed by the vanom gland.

It localises to the secreted. In terms of biological role, thrombin-like snake venom serine protease. In Crotalus durissus collilineatus (Brazilian rattlesnake), this protein is Thrombin-like enzyme collinein-3.